We begin with the raw amino-acid sequence, 116 residues long: MDKLISKKFSEFQYKYIADPDYKKEYDNNLKALHRIRLSHTTSYRDLAKFADPVCKTMISNEDFVKFNYNKIKKITNEVVNRTALANTALILMEIMKLETNQSVDKDWKRLLDKFL.

This is an uncharacterized protein from Acheta domesticus (House cricket).